The primary structure comprises 608 residues: Elongation factor 4 (608 aa).

The region spanning 11–193 is the tr-type G domain; that stretch reads KKIRNFSIIA…QIVEKVPEPS (183 aa). GTP is bound by residues 23 to 28 and 140 to 143; these read DHGKST and NKID.

It belongs to the TRAFAC class translation factor GTPase superfamily. Classic translation factor GTPase family. LepA subfamily.

Its subcellular location is the cell membrane. The enzyme catalyses GTP + H2O = GDP + phosphate + H(+). Required for accurate and efficient protein synthesis under certain stress conditions. May act as a fidelity factor of the translation reaction, by catalyzing a one-codon backward translocation of tRNAs on improperly translocated ribosomes. Back-translocation proceeds from a post-translocation (POST) complex to a pre-translocation (PRE) complex, thus giving elongation factor G a second chance to translocate the tRNAs correctly. Binds to ribosomes in a GTP-dependent manner. In Listeria innocua serovar 6a (strain ATCC BAA-680 / CLIP 11262), this protein is Elongation factor 4.